Here is a 128-residue protein sequence, read N- to C-terminus: Holo-[acyl-carrier-protein] synthase (128 aa).

Mg(2+) is bound by residues aspartate 10 and glutamate 59.

This sequence belongs to the P-Pant transferase superfamily. AcpS family. Mg(2+) is required as a cofactor.

Its subcellular location is the cytoplasm. The enzyme catalyses apo-[ACP] + CoA = holo-[ACP] + adenosine 3',5'-bisphosphate + H(+). In terms of biological role, transfers the 4'-phosphopantetheine moiety from coenzyme A to a Ser of acyl-carrier-protein. The chain is Holo-[acyl-carrier-protein] synthase from Syntrophotalea carbinolica (strain DSM 2380 / NBRC 103641 / GraBd1) (Pelobacter carbinolicus).